Consider the following 251-residue polypeptide: Triosephosphate isomerase (251 aa).

9–11 lines the substrate pocket; sequence NWK. Residue histidine 95 is the Electrophile of the active site. Glutamate 167 functions as the Proton acceptor in the catalytic mechanism. Substrate is bound by residues glycine 173, serine 212, and 233–234; that span reads GG.

Belongs to the triosephosphate isomerase family. As to quaternary structure, homodimer.

Its subcellular location is the cytoplasm. The enzyme catalyses D-glyceraldehyde 3-phosphate = dihydroxyacetone phosphate. The protein operates within carbohydrate biosynthesis; gluconeogenesis. Its pathway is carbohydrate degradation; glycolysis; D-glyceraldehyde 3-phosphate from glycerone phosphate: step 1/1. Its function is as follows. Involved in the gluconeogenesis. Catalyzes stereospecifically the conversion of dihydroxyacetone phosphate (DHAP) to D-glyceraldehyde-3-phosphate (G3P). This chain is Triosephosphate isomerase, found in Pseudomonas fluorescens (strain ATCC BAA-477 / NRRL B-23932 / Pf-5).